Consider the following 142-residue polypeptide: Acetyltransferase SG1711 (142 aa).

One can recognise an N-acetyltransferase domain in the interval 1–142 (MEIRVFRHDD…GKRLIEDQEY (142 aa)).

Belongs to the acetyltransferase family. YpeA subfamily.

The chain is Acetyltransferase SG1711 from Sodalis glossinidius (strain morsitans).